Here is an 88-residue protein sequence, read N- to C-terminus: Long neurotoxin LNTX-2 (88 aa).

The N-terminal stretch at 1–21 (MKTLLLTLVVVTIVCLDFGYA) is a signal peptide. 4 cysteine pairs are disulfide-bonded: Cys24–Cys42, Cys35–Cys63, Cys67–Cys78, and Cys79–Cys84.

Belongs to the three-finger toxin family. Long-chain subfamily. Type II alpha-neurotoxin sub-subfamily. Expressed by the venom gland.

It localises to the secreted. In terms of biological role, binds with high affinity to muscular nicotinic acetylcholine receptors (nAChRs), whereas it binds with a low affinity to neuronal alpha-7/CHRNA7 nAChRs. This is Long neurotoxin LNTX-2 from Demansia vestigiata (Lesser black whip snake).